The sequence spans 449 residues: DNA-directed RNA polymerase subunit Rpo1C (449 aa).

The tract at residues 1 to 68 (MQDVIKKIED…EGEELLKAVE (68 aa)) is unknown. Residues 69-449 (DEYLRILKVR…TGSVSVIMKK (381 aa)) are DNA-directed RNA polymerase subunit Rpo1C.

Belongs to the RNA polymerase beta' chain family. As to quaternary structure, part of the RNA polymerase complex.

The protein localises to the cytoplasm. It carries out the reaction RNA(n) + a ribonucleoside 5'-triphosphate = RNA(n+1) + diphosphate. DNA-dependent RNA polymerase (RNAP) catalyzes the transcription of DNA into RNA using the four ribonucleoside triphosphates as substrates. Forms part of the jaw domain. The polypeptide is DNA-directed RNA polymerase subunit Rpo1C (Methanothermobacter thermautotrophicus (strain Winter) (Methanobacterium thermoautotrophicum)).